We begin with the raw amino-acid sequence, 794 residues long: Kinesin-like protein KIN-13A (794 aa).

Positions Lys193–Leu526 constitute a Kinesin motor domain. Gly282–Thr289 contacts ATP. The tract at residues Ser525–Thr699 is disordered. The segment covering Glu569–Ser579 has biased composition (basic and acidic residues). Polar residues-rich tracts occupy residues Asn580 to Asn593 and Glu611 to Glu632. Over residues Gly650–Ser668 the composition is skewed to basic and acidic residues. A compositionally biased stretch (polar residues) spans Ser669–Gln696. The stretch at Glu705 to Val742 forms a coiled coil.

This sequence belongs to the TRAFAC class myosin-kinesin ATPase superfamily. Kinesin family. KIN-13 subfamily. As to quaternary structure, component of the active ARAC10-IRC5-KIN13A complex. Interacts (via-C-terminus) with ICR2 and ICR5 (via N-terminus). No interactions with ICR1. In terms of tissue distribution, expressed in leaves, roots, young and mature seedlings. Preferentially expressed in the secondary cell wall pits of differentiating metaxylem vessel cells (at the protein level).

Its subcellular location is the golgi apparatus. The protein localises to the golgi stack. The protein resides in the cytoplasm. It is found in the cytoskeleton. Its function is as follows. Internal motor kinesin involved in trichome morphogenesis. Participates in regulating the formation of Golgi-associated vesicles. Plays a central role in microtubule disassembly via the active ARAC10-ICR5 cascade, which establishes the secondary cell wall pattern in metaxylem vessel cells. Acts redundantly with KIN13B to modulate cell wall synthesis and cell expansion via the THE1 pathway. The chain is Kinesin-like protein KIN-13A from Arabidopsis thaliana (Mouse-ear cress).